The chain runs to 394 residues: MAKEKFERTKPHVNIGTIGHVDHGKTTLTAAITTVLAKKGLSELRSFDSIDNAPEEKERGITINTSHVEYETANRHYAHVDCPGHADYVKNMVTGAAQMDGAIIVVAATDGPMPQTREHILLARQVNVPKLVVFMNKCDMVEDAEMLELVEMEMRELLSFYDFDGDNTPIIQGSALGALNGVEKWEDKVMELMEAVDTWIPLPPRDVDKPFLMPVEDVFSITGRGTVATGRIETGVIHVGDEIEILGLGEDKKSVVTGVEMFRKLLDQGEAGDNVGLLLRGVDKNEIKRGMVLCKPGQIKPHSKFKAEVYILKKEEGGRHTPFHNKYRPQFYLRTMDCTGEITLPEGTEMVMPGDNVTITVELIYPVALNIGLRFAIREGGRTVGAGQITEIID.

Residues Lys-10–Arg-205 form the tr-type G domain. A G1 region spans residues Gly-19–Thr-26. Gly-19 to Thr-26 contacts GTP. Residue Thr-26 participates in Mg(2+) binding. The G2 stretch occupies residues Gly-60 to Asn-64. A G3 region spans residues Asp-81 to Gly-84. Residues Asp-81–His-85 and Asn-136–Asp-139 each bind GTP. The interval Asn-136 to Asp-139 is G4. The G5 stretch occupies residues Ser-174–Leu-176.

The protein belongs to the TRAFAC class translation factor GTPase superfamily. Classic translation factor GTPase family. EF-Tu/EF-1A subfamily. Monomer.

Its subcellular location is the cytoplasm. The catalysed reaction is GTP + H2O = GDP + phosphate + H(+). Functionally, GTP hydrolase that promotes the GTP-dependent binding of aminoacyl-tRNA to the A-site of ribosomes during protein biosynthesis. In Bacteroides fragilis (strain ATCC 25285 / DSM 2151 / CCUG 4856 / JCM 11019 / LMG 10263 / NCTC 9343 / Onslow / VPI 2553 / EN-2), this protein is Elongation factor Tu.